Here is a 145-residue protein sequence, read N- to C-terminus: uncharacterized protein (145 aa).

A disordered region spans residues 1 to 25; that stretch reads MSENNENDGFNLDPDVKEELEETKS. Over residues 14–25 the composition is skewed to basic and acidic residues; sequence PDVKEELEETKS.

This is an uncharacterized protein from His1 virus (isolate Australia/Victoria) (His1V).